Consider the following 354-residue polypeptide: Uroporphyrinogen decarboxylase (354 aa).

Substrate is bound by residues 27–31, Asp-77, Tyr-154, Thr-209, and His-327; that span reads RQAGR.

The protein belongs to the uroporphyrinogen decarboxylase family. Homodimer.

The protein localises to the cytoplasm. The enzyme catalyses uroporphyrinogen III + 4 H(+) = coproporphyrinogen III + 4 CO2. Its pathway is porphyrin-containing compound metabolism; protoporphyrin-IX biosynthesis; coproporphyrinogen-III from 5-aminolevulinate: step 4/4. Catalyzes the decarboxylation of four acetate groups of uroporphyrinogen-III to yield coproporphyrinogen-III. The polypeptide is Uroporphyrinogen decarboxylase (Escherichia coli O17:K52:H18 (strain UMN026 / ExPEC)).